Here is a 101-residue protein sequence, read N- to C-terminus: Small ribosomal subunit protein uS10 (101 aa).

The protein belongs to the universal ribosomal protein uS10 family. Part of the 30S ribosomal subunit.

In terms of biological role, involved in the binding of tRNA to the ribosomes. This Mycobacterium bovis (strain ATCC BAA-935 / AF2122/97) protein is Small ribosomal subunit protein uS10.